A 607-amino-acid chain; its full sequence is Elongation factor 4 (607 aa).

The 183-residue stretch at 11–193 (EKIRNFSIIA…QIVEKVPAPT (183 aa)) folds into the tr-type G domain. GTP contacts are provided by residues 23 to 28 (DHGKST) and 140 to 143 (NKID).

This sequence belongs to the TRAFAC class translation factor GTPase superfamily. Classic translation factor GTPase family. LepA subfamily.

It localises to the cell membrane. The enzyme catalyses GTP + H2O = GDP + phosphate + H(+). Its function is as follows. Required for accurate and efficient protein synthesis under certain stress conditions. May act as a fidelity factor of the translation reaction, by catalyzing a one-codon backward translocation of tRNAs on improperly translocated ribosomes. Back-translocation proceeds from a post-translocation (POST) complex to a pre-translocation (PRE) complex, thus giving elongation factor G a second chance to translocate the tRNAs correctly. Binds to ribosomes in a GTP-dependent manner. The sequence is that of Elongation factor 4 from Streptococcus pneumoniae serotype 19F (strain G54).